A 483-amino-acid chain; its full sequence is M protein, serotype 6 (483 aa).

The first 42 residues, 1-42 (MAKNNTNRHYSLRKLKKGTASVAVALSVIGAGLVVNTNEVSA), serve as a signal peptide directing secretion. A coiled-coil region spans residues 54–171 (DKARELLNKY…IGTLKKTLDE (118 aa)). 8 tandem repeats follow at residues 69–75 (MLQANND), 76–82 (KLTTENN), 83–89 (NLTDQNK), 90–96 (NLTTENK), 97–103 (NLTDQNK), 104–110 (NLTTENK), 111–117 (NLTDQNK), and 118–124 (NLTTENK). Residues 69–138 (MLQANNDKLT…EENRLTTENK (70 aa)) are 10 X 7 AA approximate tandem repeats of [KMNR]-L-[TQ]-[TDA]-[ENQ]-N-[NDK]. The span at 74–87 (NDKLTTENNNLTDQ) shows a compositional bias: polar residues. Residues 74 to 157 (NDKLTTENNN…EEEAANKERE (84 aa)) form a disordered region. A compositionally biased stretch (low complexity) spans 88 to 113 (NKNLTTENKNLTDQNKNLTTENKNLT). Basic and acidic residues-rich tracts occupy residues 122 to 135 (ENKE…RLTT) and 143 to 157 (KLSE…KERE). The 9-1; approximate repeat unit spans residues 125–131 (ELKAEEN). A run of 5 repeats spans residues 132 to 138 (RLTTENK), 157 to 181 (ENKE…AKEQ), 182 to 206 (ESKE…AKEQ), 207 to 231 (ESKE…AKEQ), and 232 to 256 (ESKE…AREQ). A 4.5 X 25 AA tandem repeats of E-[NS]-K-E-[TA]-I-G-T-L-K-K-[TI]-L-D-E-T-V-K-D-K-I-A-[KR]-E-Q region spans residues 157–269 (ENKEAIGTLK…QDIGALKQEL (113 aa)). Disordered regions lie at residues 255–298 (EQKS…EAKK) and 314–345 (VKEE…VEKA). A 5-2; truncated repeat occupies 257-269 (KSKQDIGALKQEL). Basic and acidic residues-rich tracts occupy residues 268-298 (ELAK…EAKK) and 328-345 (LRRD…VEKA). C repeat units lie at residues 270 to 304 (AKKD…EKDL) and 312 to 346 (DKVK…EKAL). Positions 279–347 (SEASRKGLRR…AKKQVEKALE (69 aa)) are binding to CD46. The interval 279–347 (SEASRKGLRR…AKKQVEKALE (69 aa)) is two directly repeated 27 amino acid blocks separated by 15 amino acids. The stretch at 280–408 (EASRKGLRRD…LAKLRAGKAS (129 aa)) forms a coiled coil. The hydrophilic stretch occupies residues 348-411 (EANSKLAALE…LRAGKASDSQ (64 aa)). 4 D repeats span residues 379-384 (AKLEAE), 385-390 (AKALKE), 393-398 (AKQAEE), and 400-405 (AKLRAG). The segment at 400–455 (AKLRAGKASDSQTPDAKPGNKVVPGKGQAPQAGTKPNQNKAPMKETKRQLPSTGET) is disordered. The LPXTG sorting signal signature appears at 449 to 453 (LPSTG). Thr452 carries the pentaglycyl murein peptidoglycan amidated threonine modification. Residues 453-483 (GETANPFFTAAALTVMATAGVAAVVKRKEEN) constitute a propeptide, removed by sortase.

This sequence belongs to the M protein family.

It localises to the secreted. The protein resides in the cell wall. In terms of biological role, mediates the attachment of S.pyogenes to skin epithelial cells through the binding of the human membrane cofactor protein CD46. Also binds to the factor H and factor H-like protein 1. These interactions could contribute to the fact that the M6 protein protects the bacterium from the phagocytosis by regulating the complement activation on the bacterial surface. This is M protein, serotype 6 (emm6) from Streptococcus pyogenes.